The sequence spans 652 residues: Inactive leucine-rich repeat receptor-like serine/threonine-protein kinase At1g60630 (652 aa).

An N-terminal signal peptide occupies residues 1–23 (MISSSSCMFFLVFAFFLISPVRS). The Extracellular segment spans residues 24 to 256 (SDVEALLSLK…SRTKLIGIIS (233 aa)). 6 LRR repeats span residues 64-84 (SKLV…SLNQ), 85-108 (LDQL…LSGL), 109-132 (VNLK…LTSL), 134-156 (RLKT…LLRL), 158-178 (RLYT…PLNQ), and 179-203 (ATLR…ALNR). Residues N72, N104, and N120 are each glycosylated (N-linked (GlcNAc...) asparagine). Residues N185, N205, and N225 are each glycosylated (N-linked (GlcNAc...) asparagine). A helical membrane pass occupies residues 257-277 (GSICGGILILLLTFLLICLLW). Residues 278 to 652 (RRKRSKSKRE…SLPREDHMSI (375 aa)) lie on the Cytoplasmic side of the membrane. A disordered region spans residues 286-321 (REERRSKRVAESKEAKTAETEEGTSDQKNKRFSWEK). Residues 350–624 (KASAETLGRG…VKDARAEAAL (275 aa)) enclose the Protein kinase domain. S352 is modified (phosphoserine). ATP is bound by residues 356–364 (LGRGTLGST) and K378. Phosphoserine is present on residues S430 and S433. At T509 the chain carries Phosphothreonine. Positions 630-652 (SDHSPGRWSDTIQSLPREDHMSI) are disordered.

This sequence belongs to the protein kinase superfamily. Ser/Thr protein kinase family.

It is found in the cell membrane. This is Inactive leucine-rich repeat receptor-like serine/threonine-protein kinase At1g60630 from Arabidopsis thaliana (Mouse-ear cress).